The primary structure comprises 82 residues: Toxin NaTx-13 (82 aa).

The LCN-type CS-alpha/beta domain occupies 6–70; sequence PGGYPVNQFK…KNSIEVFSCG (65 aa). 4 disulfide bridges follow: Cys-16–Cys-69, Cys-20–Cys-44, Cys-30–Cys-49, and Cys-34–Cys-51.

The protein belongs to the long (4 C-C) scorpion toxin superfamily. Sodium channel inhibitor family. In terms of tissue distribution, expressed by the venom gland.

The protein resides in the secreted. Its function is as follows. Probable sodium channel inhibitor. The polypeptide is Toxin NaTx-13 (Centruroides sculpturatus (Arizona bark scorpion)).